A 411-amino-acid polypeptide reads, in one-letter code: Na(+)-translocating NADH-quinone reductase subunit F (411 aa).

The helical transmembrane segment at 5 to 25 threads the bilayer; the sequence is VILALGIAAFTVIVLVLVAII. The 2Fe-2S ferredoxin-type domain occupies 36–130; sequence GDITIDINDD…NMEVELPEEI (95 aa). Residues C73, C79, C82, and C114 each contribute to the [2Fe-2S] cluster site. Positions 133 to 273 constitute an FAD-binding FR-type domain; the sequence is VKKWECTVIS…SGPFGEFFAK (141 aa). The catalytic stretch occupies residues 276 to 393; it reads DAEMVFIGGG…PVMNAAVIKM (118 aa).

Belongs to the NqrF family. In terms of assembly, composed of six subunits; NqrA, NqrB, NqrC, NqrD, NqrE and NqrF. Requires [2Fe-2S] cluster as cofactor. The cofactor is FAD.

The protein resides in the cell inner membrane. The enzyme catalyses a ubiquinone + n Na(+)(in) + NADH + H(+) = a ubiquinol + n Na(+)(out) + NAD(+). Functionally, NQR complex catalyzes the reduction of ubiquinone-1 to ubiquinol by two successive reactions, coupled with the transport of Na(+) ions from the cytoplasm to the periplasm. The first step is catalyzed by NqrF, which accepts electrons from NADH and reduces ubiquinone-1 to ubisemiquinone by a one-electron transfer pathway. This chain is Na(+)-translocating NADH-quinone reductase subunit F, found in Haemophilus influenzae (strain ATCC 51907 / DSM 11121 / KW20 / Rd).